Reading from the N-terminus, the 282-residue chain is Bifunctional protein FolD (282 aa).

NADP(+)-binding positions include 165–167 and I231; that span reads GAS.

The protein belongs to the tetrahydrofolate dehydrogenase/cyclohydrolase family. In terms of assembly, homodimer.

It catalyses the reaction (6R)-5,10-methylene-5,6,7,8-tetrahydrofolate + NADP(+) = (6R)-5,10-methenyltetrahydrofolate + NADPH. The enzyme catalyses (6R)-5,10-methenyltetrahydrofolate + H2O = (6R)-10-formyltetrahydrofolate + H(+). The protein operates within one-carbon metabolism; tetrahydrofolate interconversion. Its function is as follows. Catalyzes the oxidation of 5,10-methylenetetrahydrofolate to 5,10-methenyltetrahydrofolate and then the hydrolysis of 5,10-methenyltetrahydrofolate to 10-formyltetrahydrofolate. This Francisella tularensis subsp. holarctica (strain FTNF002-00 / FTA) protein is Bifunctional protein FolD.